Here is a 318-residue protein sequence, read N- to C-terminus: Mitochondrial coenzyme A transporter SLC25A42 (318 aa).

Solcar repeat units lie at residues 31 to 117 (RQVL…YKRI), 129 to 214 (LPPW…LKSL), and 224 to 312 (PYPF…MQIL). Helical transmembrane passes span 33–53 (VLSS…AVAP), 89–109 (LWRG…IQFS), 135–155 (LLAG…LDLV), 186–206 (LYFG…LSFF), 230–250 (MVFG…LDVV), and 293–313 (LKGP…QILL).

The protein belongs to the mitochondrial carrier (TC 2.A.29) family.

It localises to the mitochondrion inner membrane. It catalyses the reaction ADP(out) + CoA(in) = ADP(in) + CoA(out). The catalysed reaction is 3'-dephospho-CoA(in) + ADP(out) = 3'-dephospho-CoA(out) + ADP(in). It carries out the reaction adenosine 3',5'-bisphosphate(in) + ADP(out) = adenosine 3',5'-bisphosphate(out) + ADP(in). The enzyme catalyses AMP(in) + ADP(out) = AMP(out) + ADP(in). It catalyses the reaction dADP(in) + ADP(out) = dADP(out) + ADP(in). The catalysed reaction is ADP(in) + ATP(out) = ADP(out) + ATP(in). Functionally, mitochondrial carrier mediating the transport of coenzyme A (CoA) in mitochondria in exchange for intramitochondrial (deoxy)adenine nucleotides and adenosine 3',5'-diphosphate. This Mus musculus (Mouse) protein is Mitochondrial coenzyme A transporter SLC25A42 (Slc25a42).